Here is a 523-residue protein sequence, read N- to C-terminus: Glutamate--cysteine ligase (523 aa).

This sequence belongs to the glutamate--cysteine ligase type 1 family. Type 1 subfamily.

It carries out the reaction L-cysteine + L-glutamate + ATP = gamma-L-glutamyl-L-cysteine + ADP + phosphate + H(+). It participates in sulfur metabolism; glutathione biosynthesis; glutathione from L-cysteine and L-glutamate: step 1/2. This is Glutamate--cysteine ligase from Baumannia cicadellinicola subsp. Homalodisca coagulata.